Reading from the N-terminus, the 487-residue chain is uncharacterized protein (487 aa).

3 helical membrane passes run A10 to A30, V45 to A65, and A439 to L459.

Its subcellular location is the cell membrane. This is an uncharacterized protein from Mycobacterium tuberculosis (strain CDC 1551 / Oshkosh).